The sequence spans 538 residues: Cytochrome c-552 (538 aa).

Residues 1–55 (MKIYLRFVWILIIILNFLLNLFITTNGVIIVNAFKKSLIVAASFASLSLFNSATA) form the signal peptide. Residue H133 participates in heme c binding. Heme contacts are provided by C161, C164, and K165. C199, C202, H203, C264, C267, and H268 together coordinate heme c. 4 residues coordinate Ca(2+): E270, Y271, K316, and Q318. Position 271 (Y271) interacts with substrate. H319 is a binding site for substrate. The heme c site is built by H330, C337, C340, H341, H356, C369, C372, H373, and H448.

It belongs to the cytochrome c-552 family. The cofactor is Ca(2+). It depends on heme c as a cofactor.

Its subcellular location is the periplasm. It catalyses the reaction 6 Fe(III)-[cytochrome c] + NH4(+) + 2 H2O = 6 Fe(II)-[cytochrome c] + nitrite + 8 H(+). The protein operates within nitrogen metabolism; nitrate reduction (assimilation). Its function is as follows. Catalyzes the reduction of nitrite to ammonia, consuming six electrons in the process. The polypeptide is Cytochrome c-552 (Haemophilus influenzae (strain ATCC 51907 / DSM 11121 / KW20 / Rd)).